Reading from the N-terminus, the 213-residue chain is MHQQKRQPELVEGNLPVFVFPTELIFYADDQSTHKQVLTLYNPYEFALKFKVLCTTPNKYVVVDAAGAVKPQCCMDIVIRHRDVRSCHYGVIDKFRLQVSEQSQRKALGRKEVVATLLPSAKEQQKEEEEKRIKEHLTESLFFEQSFQPENRTVSSGPSLLTVFLAVVCITALMLPTLGDVESLVPLYLHLSVNQKLVAAYILGLITMAIFRT.

Positions 16 to 143 (PVFVFPTELI…KEHLTESLFF (128 aa)) constitute an MSP domain. 2 helical membrane passes run 159–179 (SLLTVFLAVVCITALMLPTLG) and 191–211 (LSVNQKLVAAYILGLITMAIF). Positions 205–208 (LITM) match the Nuclear export signal motif.

Its subcellular location is the endoplasmic reticulum membrane. The protein resides in the golgi apparatus membrane. Functionally, plays a role in differentiation and/or proliferation of mesenchymal stem cells. Proposed to be involved in epithelial-to-mesenchymal transition (EMT). However, another study suggests that it is not required for EMT or stem cell self-renewal and acts during later stages of differentiation. The polypeptide is Motile sperm domain-containing protein 1 (MOSPD1) (Bos taurus (Bovine)).